Consider the following 753-residue polypeptide: Neuroendocrine convertase 1 (753 aa).

An N-terminal signal peptide occupies residues 1-27 (MEQRGWTLQCTAFAFFCVWCALNSVKA). Residues 28–110 (KRQFVNEWAA…QQYEKERSKR (83 aa)) constitute a propeptide that is removed on maturation. Residues 129 to 450 (QWYLQDTRMT…FGLLNAKALV (322 aa)) form the Peptidase S8 domain. Residues aspartate 167 and histidine 208 each act as charge relay system in the active site. Disulfide bonds link cysteine 225-cysteine 374 and cysteine 317-cysteine 347. The active-site Charge relay system is serine 382. Asparagine 401 carries an N-linked (GlcNAc...) asparagine glycan. In terms of domain architecture, P/Homo B spans 460 to 597 (NVPEKKECVV…KLILHGTSSQ (138 aa)). Cysteine 467 and cysteine 494 are oxidised to a cystine. A compositionally biased stretch (polar residues) spans 633–651 (QKSLNGNLLVPKNSSSSNV). The segment at 633-663 (QKSLNGNLLVPKNSSSSNVEGRRDEQVQGTP) is disordered. Residue asparagine 645 is glycosylated (N-linked (GlcNAc...) asparagine).

This sequence belongs to the peptidase S8 family. Furin subfamily. Ca(2+) is required as a cofactor.

The protein resides in the cytoplasmic vesicle. The protein localises to the secretory vesicle. The catalysed reaction is Release of protein hormones, neuropeptides and renin from their precursors, generally by hydrolysis of -Lys-Arg-|- bonds.. In terms of biological role, involved in the processing of hormone and other protein precursors at sites comprised of pairs of basic amino acid residues. Substrates include POMC, renin, enkephalin, dynorphin, somatostatin, insulin and AGRP. This chain is Neuroendocrine convertase 1 (Pcsk1), found in Mus musculus (Mouse).